A 289-amino-acid polypeptide reads, in one-letter code: ATP synthase gamma chain (289 aa).

The protein belongs to the ATPase gamma chain family. In terms of assembly, F-type ATPases have 2 components, CF(1) - the catalytic core - and CF(0) - the membrane proton channel. CF(1) has five subunits: alpha(3), beta(3), gamma(1), delta(1), epsilon(1). CF(0) has three main subunits: a, b and c.

The protein localises to the cell inner membrane. Functionally, produces ATP from ADP in the presence of a proton gradient across the membrane. The gamma chain is believed to be important in regulating ATPase activity and the flow of protons through the CF(0) complex. The polypeptide is ATP synthase gamma chain (Histophilus somni (strain 129Pt) (Haemophilus somnus)).